A 466-amino-acid chain; its full sequence is Methylenetetrahydrofolate--tRNA-(uracil-5-)-methyltransferase TrmFO (466 aa).

14-19 provides a ligand contact to FAD; it reads GGGLAG.

This sequence belongs to the MnmG family. TrmFO subfamily. The cofactor is FAD.

The protein localises to the cytoplasm. It catalyses the reaction uridine(54) in tRNA + (6R)-5,10-methylene-5,6,7,8-tetrahydrofolate + NADH + H(+) = 5-methyluridine(54) in tRNA + (6S)-5,6,7,8-tetrahydrofolate + NAD(+). The enzyme catalyses uridine(54) in tRNA + (6R)-5,10-methylene-5,6,7,8-tetrahydrofolate + NADPH + H(+) = 5-methyluridine(54) in tRNA + (6S)-5,6,7,8-tetrahydrofolate + NADP(+). Functionally, catalyzes the folate-dependent formation of 5-methyl-uridine at position 54 (M-5-U54) in all tRNAs. The polypeptide is Methylenetetrahydrofolate--tRNA-(uracil-5-)-methyltransferase TrmFO (Brucella melitensis biotype 1 (strain ATCC 23456 / CCUG 17765 / NCTC 10094 / 16M)).